We begin with the raw amino-acid sequence, 482 residues long: Falcipain-2b (482 aa).

The Cytoplasmic portion of the chain corresponds to 1–35; the sequence is MDYHMDYIPNEVISHQGERFVDKYVDRKILKNKKS. A propeptide spans 1–241 (activation peptide); that stretch reads MDYHMDYIPN…PLKNSKYLLD (241 aa). The Bipartite vacuolar targeting signal 1 signature appears at 16–25; it reads QGERFVDKYV. The chain crosses the membrane as a helical; Signal-anchor for type II membrane protein span at residues 36–56; it reads LLVIISLSVLSVVGFILFYFT. The Lumenal portion of the chain corresponds to 57-482; sequence PNFRKSDLFK…GTDAFIPLIE (426 aa). Asn67 is a glycosylation site (N-linked (GlcNAc...) asparagine). The Bipartite vacuolar targeting signal 2 motif lies at 84–105; it reads KSPNGKKFIVSKIDEALSFYDN. Asn117 carries N-linked (GlcNAc...) asparagine glycosylation. A Nose motif; required for the correct folding of the mature form motif is present at residues 242–258; it reads QINYDAVIKKYKGNENF. 4 cysteine pairs are disulfide-bonded: Cys280–Cys321, Cys314–Cys355, Cys340–Cys360, and Cys409–Cys470. The active site involves Cys283. The active site involves His415. The Arm motif; binds to host hemoglobin and required for the inhibitory interaction between the propeptide and the catalytic domain motif lies at 426 to 435; the sequence is EIVNPLTKKG.

The protein belongs to the peptidase C1 family. Component of the hemozoin formation complex (HFC) composed of falcipains FP2A and/or FP2B, plasmepsins PMII, PMIII/HAP and PMIV, heme detoxifying protein HDP and falcilysin FLN. The HFC complex is involved in hemoglobin degradation and detoxification of heme in the food vacuole during the asexual blood stage.

The protein resides in the vacuole. Its subcellular location is the membrane. Its function is as follows. Cysteine protease which cleaves native host hemoglobin in the food vacuole during the asexual blood stage. Preferentially cleaves substrates which have a leucine at the P2 position. The chain is Falcipain-2b from Plasmodium falciparum (isolate 3D7).